We begin with the raw amino-acid sequence, 183 residues long: ATP-dependent protease subunit HslV (183 aa).

The active site involves Thr-13. Positions 168, 171, and 174 each coordinate Na(+).

Belongs to the peptidase T1B family. HslV subfamily. As to quaternary structure, a double ring-shaped homohexamer of HslV is capped on each side by a ring-shaped HslU homohexamer. The assembly of the HslU/HslV complex is dependent on binding of ATP.

The protein localises to the cytoplasm. The catalysed reaction is ATP-dependent cleavage of peptide bonds with broad specificity.. With respect to regulation, allosterically activated by HslU binding. Its function is as follows. Protease subunit of a proteasome-like degradation complex believed to be a general protein degrading machinery. In Xanthomonas axonopodis pv. citri (strain 306), this protein is ATP-dependent protease subunit HslV.